We begin with the raw amino-acid sequence, 666 residues long: Endogenous retrovirus group K member 9 Gag polyprotein (666 aa).

Glycine 2 is lipidated: N-myristoyl glycine. The disordered stretch occupies residues 165-264 (GKGPELVGPS…APPSRQGSEL (100 aa)). The span at 232–247 (GMPPAPQGRAPYPQPP) shows a compositional bias: pro residues. CCHC-type zinc fingers lie at residues 544 to 561 (GKCYNCGQIGHLKKNCPV) and 580 to 597 (DLCPRCKKGKHWASQCRS). The tract at residues 598–641 (KFDKNGQPLSGNEQRGQPQAPQQTGAFPIQPFVPQGFQGQQPPL) is disordered. The segment covering 604 to 622 (QPLSGNEQRGQPQAPQQTG) has biased composition (polar residues). Positions 624–640 (FPIQPFVPQGFQGQQPP) are enriched in low complexity.

It belongs to the beta type-B retroviral Gag protein family. HERV class-II K(HML-2) gag subfamily. Myristoylation is essential for retroviral assembly. Alteration of the glycine residue leads to a block in the budding of particles and an accumulation of Gag inside the cell. Post-translationally, specific enzymatic cleavages may yield mature proteins.

It localises to the cell membrane. Functionally, the products of the Gag polyproteins of infectious retroviruses perform highly complex orchestrated tasks during the assembly, budding, maturation, and infection stages of the viral replication cycle. During viral assembly, the proteins form membrane associations and self-associations that ultimately result in budding of an immature virion from the infected cell. Gag precursors also function during viral assembly to selectively bind and package two plus strands of genomic RNA. Endogenous Gag proteins may have kept, lost or modified their original function during evolution. The protein is Endogenous retrovirus group K member 9 Gag polyprotein (ERVK-9) of Homo sapiens (Human).